The chain runs to 321 residues: Phospholipid phosphatase-related protein type 5 (321 aa).

Helical transmembrane passes span 10 to 30 (SSML…AYYF), 62 to 82 (AVPP…VIIV), 122 to 142 (FLGI…AGQV), 196 to 213 (AALS…ITNT), 225 to 245 (VLCL…VAEY), and 252 to 272 (VIAG…CVVN).

It belongs to the PA-phosphatase related phosphoesterase family. As to expression, isoform 1 is expressed in brain, lung, kidney and colon. Isoform 2 is expressed in placenta, skeletal muscle and kidney.

Its subcellular location is the cell membrane. Induces filopodia formation and promotes neurite growth in a CDC42-independent manner; impedes neurite growth inhibitory-mediated axonal retraction. This is Phospholipid phosphatase-related protein type 5 from Homo sapiens (Human).